A 355-amino-acid chain; its full sequence is Holliday junction branch migration complex subunit RuvB (355 aa).

The large ATPase domain (RuvB-L) stretch occupies residues 4-190 (TDKLAAERII…FGIVARLEFY (187 aa)). ATP-binding positions include Leu29, Arg30, Gly71, Lys74, Thr75, Thr76, 137–139 (EDY), Arg180, Tyr190, and Arg227. Mg(2+) is bound at residue Thr75. The tract at residues 191 to 261 (NAEQLARIVT…VADAALKMLD (71 aa)) is small ATPAse domain (RuvB-S). Residues 264-355 (AVGFDLMDRK…LPGLWDSAAT (92 aa)) form a head domain (RuvB-H) region. Positions 300, 319, and 324 each coordinate DNA.

The protein belongs to the RuvB family. As to quaternary structure, homohexamer. Forms an RuvA(8)-RuvB(12)-Holliday junction (HJ) complex. HJ DNA is sandwiched between 2 RuvA tetramers; dsDNA enters through RuvA and exits via RuvB. An RuvB hexamer assembles on each DNA strand where it exits the tetramer. Each RuvB hexamer is contacted by two RuvA subunits (via domain III) on 2 adjacent RuvB subunits; this complex drives branch migration. In the full resolvosome a probable DNA-RuvA(4)-RuvB(12)-RuvC(2) complex forms which resolves the HJ.

Its subcellular location is the cytoplasm. The enzyme catalyses ATP + H2O = ADP + phosphate + H(+). Its function is as follows. The RuvA-RuvB-RuvC complex processes Holliday junction (HJ) DNA during genetic recombination and DNA repair, while the RuvA-RuvB complex plays an important role in the rescue of blocked DNA replication forks via replication fork reversal (RFR). RuvA specifically binds to HJ cruciform DNA, conferring on it an open structure. The RuvB hexamer acts as an ATP-dependent pump, pulling dsDNA into and through the RuvAB complex. RuvB forms 2 homohexamers on either side of HJ DNA bound by 1 or 2 RuvA tetramers; 4 subunits per hexamer contact DNA at a time. Coordinated motions by a converter formed by DNA-disengaged RuvB subunits stimulates ATP hydrolysis and nucleotide exchange. Immobilization of the converter enables RuvB to convert the ATP-contained energy into a lever motion, pulling 2 nucleotides of DNA out of the RuvA tetramer per ATP hydrolyzed, thus driving DNA branch migration. The RuvB motors rotate together with the DNA substrate, which together with the progressing nucleotide cycle form the mechanistic basis for DNA recombination by continuous HJ branch migration. Branch migration allows RuvC to scan DNA until it finds its consensus sequence, where it cleaves and resolves cruciform DNA. This is Holliday junction branch migration complex subunit RuvB from Paraburkholderia xenovorans (strain LB400).